Here is a 138-residue protein sequence, read N- to C-terminus: Lutropin subunit beta (138 aa).

An N-terminal signal peptide occupies residues 1-17 (LQGLLLWLLLSVGGVWA). 6 cysteine pairs are disulfide-bonded: Cys26-Cys74, Cys40-Cys89, Cys43-Cys127, Cys51-Cys105, Cys55-Cys107, and Cys110-Cys117. N-linked (GlcNAc...) asparagine glycosylation occurs at Asn30.

Belongs to the glycoprotein hormones subunit beta family. Heterodimer of a common alpha chain and a unique beta chain which confers biological specificity to thyrotropin, lutropin, follitropin and gonadotropin.

The protein localises to the secreted. Promotes spermatogenesis and ovulation by stimulating the testes and ovaries to synthesize steroids. The chain is Lutropin subunit beta (LHB) from Canis lupus familiaris (Dog).